Here is a 407-residue protein sequence, read N- to C-terminus: Phosphopentomutase (407 aa).

Residues Asp11, Asp305, His310, Asp346, His347, and His358 each contribute to the Mn(2+) site.

This sequence belongs to the phosphopentomutase family. Mn(2+) serves as cofactor.

Its subcellular location is the cytoplasm. It carries out the reaction 2-deoxy-alpha-D-ribose 1-phosphate = 2-deoxy-D-ribose 5-phosphate. The enzyme catalyses alpha-D-ribose 1-phosphate = D-ribose 5-phosphate. It functions in the pathway carbohydrate degradation; 2-deoxy-D-ribose 1-phosphate degradation; D-glyceraldehyde 3-phosphate and acetaldehyde from 2-deoxy-alpha-D-ribose 1-phosphate: step 1/2. Its function is as follows. Isomerase that catalyzes the conversion of deoxy-ribose 1-phosphate (dRib-1-P) and ribose 1-phosphate (Rib-1-P) to deoxy-ribose 5-phosphate (dRib-5-P) and ribose 5-phosphate (Rib-5-P), respectively. This chain is Phosphopentomutase, found in Legionella pneumophila subsp. pneumophila (strain Philadelphia 1 / ATCC 33152 / DSM 7513).